A 134-amino-acid chain; its full sequence is Transcription antitermination protein NusB (134 aa).

It belongs to the NusB family.

Its function is as follows. Involved in transcription antitermination. Required for transcription of ribosomal RNA (rRNA) genes. Binds specifically to the boxA antiterminator sequence of the ribosomal RNA (rrn) operons. The chain is Transcription antitermination protein NusB from Halalkalibacterium halodurans (strain ATCC BAA-125 / DSM 18197 / FERM 7344 / JCM 9153 / C-125) (Bacillus halodurans).